Consider the following 2327-residue polypeptide: Acetyl-CoA carboxylase 2 (2327 aa).

The segment at 1-62 (MTSTHVATLG…NGGVSDSKKL (62 aa)) is disordered. Residues 134-641 (PIHSVLVANN…HTGWLDTRIA (508 aa)) enclose the Biotin carboxylation domain. The region spanning 287–481 (ECCLDSIPDE…AAQVAVGMGI (195 aa)) is the ATP-grasp domain. 313–370 (CQVVGYPAMIKASWGGGGKGIRKVHNDDEVRTLFKQVQGEVPGSPIFIMRLAAQSRHL) is a binding site for ATP. E436, E450, and N452 together coordinate Mg(2+). Residues E436, E450, and N452 each contribute to the Mn(2+) site. The active site involves R454. Positions 768 to 842 (LQNDHDPSKL…QAGDLIARLD (75 aa)) constitute a Biotinyl-binding domain. An N6-biotinyllysine modification is found at K809. The CoA carboxyltransferase N-terminal domain maps to 1568-1909 (PYQPLSVIDL…YIGGPLPVTT (342 aa)). The interval 1568–2227 (PYQPLSVIDL…EDVLAKEIRA (660 aa)) is carboxyltransferase. Positions 1818, 2119, and 2121 each coordinate CoA. A CoA carboxyltransferase C-terminal domain is found at 1913-2227 (PPDRPVAYIP…EDVLAKEIRA (315 aa)).

In terms of assembly, homodimer. Biotin is required as a cofactor. Mg(2+) serves as cofactor. It depends on Mn(2+) as a cofactor.

It localises to the cytoplasm. The protein resides in the cytosol. It catalyses the reaction hydrogencarbonate + acetyl-CoA + ATP = malonyl-CoA + ADP + phosphate + H(+). The enzyme catalyses N(6)-biotinyl-L-lysyl-[protein] + hydrogencarbonate + ATP = N(6)-carboxybiotinyl-L-lysyl-[protein] + ADP + phosphate + H(+). Its pathway is lipid metabolism; malonyl-CoA biosynthesis; malonyl-CoA from acetyl-CoA: step 1/1. Multifunctional enzyme that catalyzes the carboxylation of acetyl-CoA, forming malonyl-CoA, which is used in the plastid for fatty acid synthesis and in the cytosol in various biosynthetic pathways including fatty acid elongation. This chain is Acetyl-CoA carboxylase 2 (ACC2), found in Oryza sativa subsp. japonica (Rice).